Reading from the N-terminus, the 174-residue chain is MTTIVSVRRNNQVVIAGDGQVSLGNTVMKGNARKVRRLYHNKVLAGFAGGTADAFTLFERFEAKLEMHQGHLLKSAVELAKDWRSDKMLRKLEAMLVVADTESSLIITGNGDVVQPEYDLIAIGSGGNYAHASALALLQNTELSAEEIAEKSLTIAGDICVFTNQFKTIEKLDY.

The active site involves T2. 3 residues coordinate Na(+): G157, C160, and T163.

Belongs to the peptidase T1B family. HslV subfamily. A double ring-shaped homohexamer of HslV is capped on each side by a ring-shaped HslU homohexamer. The assembly of the HslU/HslV complex is dependent on binding of ATP.

It localises to the cytoplasm. It catalyses the reaction ATP-dependent cleavage of peptide bonds with broad specificity.. Allosterically activated by HslU binding. Functionally, protease subunit of a proteasome-like degradation complex believed to be a general protein degrading machinery. This Shewanella frigidimarina (strain NCIMB 400) protein is ATP-dependent protease subunit HslV.